Here is a 177-residue protein sequence, read N- to C-terminus: MAELATIARPYAEALFRVAKAADLNGWSELVSEMAQVAAHPDVYALAHNPKISDDVISSAFISALKSPVGAEAKNFINMLVQNDRLTLLPEIATQFHALKNAQEGAADAEIVSAFELSAAQLTELVATLEKKFGRKLNPTVAVDSALIGGVRVVVGDEVLDTSVRAKLQQMQVALTA.

Belongs to the ATPase delta chain family. In terms of assembly, F-type ATPases have 2 components, F(1) - the catalytic core - and F(0) - the membrane proton channel. F(1) has five subunits: alpha(3), beta(3), gamma(1), delta(1), epsilon(1). F(0) has three main subunits: a(1), b(2) and c(10-14). The alpha and beta chains form an alternating ring which encloses part of the gamma chain. F(1) is attached to F(0) by a central stalk formed by the gamma and epsilon chains, while a peripheral stalk is formed by the delta and b chains.

It is found in the cell inner membrane. Its function is as follows. F(1)F(0) ATP synthase produces ATP from ADP in the presence of a proton or sodium gradient. F-type ATPases consist of two structural domains, F(1) containing the extramembraneous catalytic core and F(0) containing the membrane proton channel, linked together by a central stalk and a peripheral stalk. During catalysis, ATP synthesis in the catalytic domain of F(1) is coupled via a rotary mechanism of the central stalk subunits to proton translocation. In terms of biological role, this protein is part of the stalk that links CF(0) to CF(1). It either transmits conformational changes from CF(0) to CF(1) or is implicated in proton conduction. The chain is ATP synthase subunit delta from Herminiimonas arsenicoxydans.